We begin with the raw amino-acid sequence, 875 residues long: Acetyl-coenzyme A carboxylase carboxyl transferase subunit alpha, chloroplastic (875 aa).

The transit peptide at 1–50 directs the protein to the chloroplast; it reads MASSSATLVGSTASDLLRSSTTGFTGVPLRTLGRAGLVLKRRDLTVSVTA. The CoA carboxyltransferase C-terminal domain maps to 128-380; that stretch reads EAKYQKALVE…KIAINEAMDE (253 aa). Residues 664–705 are a coiled coil; that stretch reads LLLDKNKAATRKQELKKKSDEHKEAARLEQELKKKFDEVMDT. Positions 845 to 875 are disordered; that stretch reads KEKYENLTRPAGDTLTDDKLREKVGVNRNFS. Positions 860–869 are enriched in basic and acidic residues; that stretch reads TDDKLREKVG.

This sequence belongs to the AccA family. In terms of assembly, acetyl-CoA carboxylase is a heterohexamer composed of biotin carboxyl carrier protein, biotin carboxylase and two subunits each of ACCase subunit alpha and ACCase plastid-coded subunit beta (accD).

It localises to the plastid. The protein localises to the chloroplast inner membrane. It catalyses the reaction N(6)-carboxybiotinyl-L-lysyl-[protein] + acetyl-CoA = N(6)-biotinyl-L-lysyl-[protein] + malonyl-CoA. Its pathway is lipid metabolism; malonyl-CoA biosynthesis; malonyl-CoA from acetyl-CoA: step 1/1. Activated by reductants such as dithiothreitol (DTT), and by thioredoxin in vivo, following exposure to light. Component of the acetyl coenzyme A carboxylase (ACC) complex. First, biotin carboxylase catalyzes the carboxylation of biotin on its carrier protein (BCCP) and then the CO(2) group is transferred by the carboxyltransferase to acetyl-CoA to form malonyl-CoA. The sequence is that of Acetyl-coenzyme A carboxylase carboxyl transferase subunit alpha, chloroplastic (ACCA) from Pisum sativum (Garden pea).